The chain runs to 323 residues: tRNA-dihydrouridine synthase B (323 aa).

Residues 16–18 (PMA) and Q70 contribute to the FMN site. C100 acts as the Proton donor in catalysis. FMN contacts are provided by residues K139, 200 to 202 (NGD), and 224 to 225 (GR).

This sequence belongs to the Dus family. DusB subfamily. FMN is required as a cofactor.

The catalysed reaction is a 5,6-dihydrouridine in tRNA + NAD(+) = a uridine in tRNA + NADH + H(+). It catalyses the reaction a 5,6-dihydrouridine in tRNA + NADP(+) = a uridine in tRNA + NADPH + H(+). In terms of biological role, catalyzes the synthesis of 5,6-dihydrouridine (D), a modified base found in the D-loop of most tRNAs, via the reduction of the C5-C6 double bond in target uridines. The sequence is that of tRNA-dihydrouridine synthase B from Proteus vulgaris.